A 120-amino-acid polypeptide reads, in one-letter code: Large ribosomal subunit protein bL20 (120 aa).

It belongs to the bacterial ribosomal protein bL20 family.

Its function is as follows. Binds directly to 23S ribosomal RNA and is necessary for the in vitro assembly process of the 50S ribosomal subunit. It is not involved in the protein synthesizing functions of that subunit. This Baumannia cicadellinicola subsp. Homalodisca coagulata protein is Large ribosomal subunit protein bL20.